The primary structure comprises 510 residues: NAD(P)H-quinone oxidoreductase subunit 2 B, chloroplastic (510 aa).

12 consecutive transmembrane segments (helical) span residues 24–44, 57–77, 99–119, 124–144, 183–203, 227–247, 295–315, 323–343, 347–367, 395–415, 418–438, and 484–504; these read LLLF…GLIL, IPWL…ALLF, IFQF…VEYI, MAIT…MFLC, YLLM…WLYG, PGIS…LSPA, WHLL…LIAI, MLAY…IVGD, GYAS…GTFA, ALSS…AGFF, LHLF…IGLL, and MIVC…IIAI.

The protein belongs to the complex I subunit 2 family. As to quaternary structure, NDH is composed of at least 16 different subunits, 5 of which are encoded in the nucleus.

The protein localises to the plastid. It localises to the chloroplast thylakoid membrane. The catalysed reaction is a plastoquinone + NADH + (n+1) H(+)(in) = a plastoquinol + NAD(+) + n H(+)(out). It carries out the reaction a plastoquinone + NADPH + (n+1) H(+)(in) = a plastoquinol + NADP(+) + n H(+)(out). Its function is as follows. NDH shuttles electrons from NAD(P)H:plastoquinone, via FMN and iron-sulfur (Fe-S) centers, to quinones in the photosynthetic chain and possibly in a chloroplast respiratory chain. The immediate electron acceptor for the enzyme in this species is believed to be plastoquinone. Couples the redox reaction to proton translocation, and thus conserves the redox energy in a proton gradient. In Calycanthus floridus var. glaucus (Eastern sweetshrub), this protein is NAD(P)H-quinone oxidoreductase subunit 2 B, chloroplastic.